The following is a 217-amino-acid chain: 3,4-dihydroxy-2-butanone 4-phosphate synthase (217 aa).

Residues 37–38 (RE), aspartate 42, 150–154 (RRGHT), and glutamate 174 contribute to the D-ribulose 5-phosphate site. Glutamate 38 is a binding site for Mg(2+). Histidine 153 lines the Mg(2+) pocket.

Belongs to the DHBP synthase family. In terms of assembly, homodimer. Mg(2+) is required as a cofactor. The cofactor is Mn(2+).

The enzyme catalyses D-ribulose 5-phosphate = (2S)-2-hydroxy-3-oxobutyl phosphate + formate + H(+). It participates in cofactor biosynthesis; riboflavin biosynthesis; 2-hydroxy-3-oxobutyl phosphate from D-ribulose 5-phosphate: step 1/1. Catalyzes the conversion of D-ribulose 5-phosphate to formate and 3,4-dihydroxy-2-butanone 4-phosphate. This is 3,4-dihydroxy-2-butanone 4-phosphate synthase from Desulforapulum autotrophicum (strain ATCC 43914 / DSM 3382 / VKM B-1955 / HRM2) (Desulfobacterium autotrophicum).